A 307-amino-acid chain; its full sequence is Small ribosomal subunit biogenesis GTPase RsgA (307 aa).

Residues 1-21 (MPSEHPFSDGISTPNPKETMN) are disordered. A compositionally biased stretch (polar residues) spans 10–21 (GISTPNPKETMN). Residues 85-242 (RQDAWKTKLI…LIDSPGLQEF (158 aa)) enclose the CP-type G domain. GTP contacts are provided by residues 135 to 138 (NKAD) and 184 to 192 (GQSGMGKST). Residues cysteine 266, cysteine 271, histidine 273, and cysteine 279 each coordinate Zn(2+).

It belongs to the TRAFAC class YlqF/YawG GTPase family. RsgA subfamily. As to quaternary structure, monomer. Associates with 30S ribosomal subunit, binds 16S rRNA. Zn(2+) serves as cofactor.

Its subcellular location is the cytoplasm. One of several proteins that assist in the late maturation steps of the functional core of the 30S ribosomal subunit. Helps release RbfA from mature subunits. May play a role in the assembly of ribosomal proteins into the subunit. Circularly permuted GTPase that catalyzes slow GTP hydrolysis, GTPase activity is stimulated by the 30S ribosomal subunit. This Neisseria gonorrhoeae (strain NCCP11945) protein is Small ribosomal subunit biogenesis GTPase RsgA.